We begin with the raw amino-acid sequence, 135 residues long: Interleukin-4 (135 aa).

The N-terminal stretch at 1–24 (MGLTSQLIPALVCLLVCTSHFVHG) is a signal peptide. Cystine bridges form between C48–C85 and C70–C105. N-linked (GlcNAc...) asparagine glycosylation is found at N62 and N96.

It belongs to the IL-4/IL-13 family.

Its subcellular location is the secreted. Its function is as follows. Participates in at least several B-cell activation processes as well as of other cell types. It is a costimulator of DNA-synthesis. It induces the expression of class II MHC molecules on resting B-cells. It enhances both secretion and cell surface expression of IgE and IgG1. It also regulates the expression of the low affinity Fc receptor for IgE (CD23) on both lymphocytes and monocytes. Positively regulates IL31RA expression in macrophages. Stimulates autophagy in dendritic cells by interfering with mTORC1 signaling and through the induction of RUFY4. The sequence is that of Interleukin-4 (IL4) from Ovis aries (Sheep).